The following is a 276-amino-acid chain: MGQKVNPHGFRLGITTDFKSRWYADKLYKDYVKEDVAIRRMMTKGMERAGISKVEIERTRDRVRVDIHTARPGIVIGRRGAEADRIRGELEKLTGKQVQLNILEVKNPEVDAQLVAQAVAEQLSSRVSFRRAMRKSMQSSMKAGAKGIKIQCGGRLGGAEMSRSEFYREGRVPLHTLRANVDYGFFEAKTTFGRIGVKVWIYKGDVKNIAEVRAENAAARAGNRPARGGADRPAGRGGRGGERGGRGRKPQQSPAAEAPKADAAAAPAAESTGTEA.

Residues 38-106 form the KH type-2 domain; it reads IRRMMTKGME…QVQLNILEVK (69 aa). Positions 216-228 are enriched in low complexity; that stretch reads NAAARAGNRPARG. Positions 216 to 276 are disordered; that stretch reads NAAARAGNRP…PAAESTGTEA (61 aa). Residues 229 to 245 show a composition bias toward basic and acidic residues; sequence GADRPAGRGGRGGERGG. Residues 254–269 are compositionally biased toward low complexity; that stretch reads PAAEAPKADAAAAPAA.

Belongs to the universal ribosomal protein uS3 family. Part of the 30S ribosomal subunit. Forms a tight complex with proteins S10 and S14.

In terms of biological role, binds the lower part of the 30S subunit head. Binds mRNA in the 70S ribosome, positioning it for translation. This is Small ribosomal subunit protein uS3 from Streptomyces griseus subsp. griseus (strain JCM 4626 / CBS 651.72 / NBRC 13350 / KCC S-0626 / ISP 5235).